Consider the following 745-residue polypeptide: uncharacterized protein (745 aa).

The HTH araC/xylS-type domain occupies 158 to 256; sequence NQVCDYIELH…HQTPKQYRGD (99 aa). 2 consecutive DNA-binding regions (H-T-H motif) follow at residues 175–196 and 223–246; these read SELS…TESL and ITDI…KHFT.

This is an uncharacterized protein from Staphylococcus aureus (strain COL).